Consider the following 301-residue polypeptide: 3-methyl-2-oxobutanoate hydroxymethyltransferase (301 aa).

The span at 1–28 (MATSNSSDSSMSAEVPAPYGNGPANAPA) shows a compositional bias: low complexity. Residues 1–37 (MATSNSSDSSMSAEVPAPYGNGPANAPATPSDTAKKP) form a disordered region. Asp-82 and Asp-121 together coordinate Mg(2+). Residues 82–83 (DS), Asp-121, and Lys-151 each bind 3-methyl-2-oxobutanoate. Glu-153 provides a ligand contact to Mg(2+). Glu-219 serves as the catalytic Proton acceptor.

The protein belongs to the PanB family. As to quaternary structure, homodecamer; pentamer of dimers. Mg(2+) is required as a cofactor.

The protein resides in the cytoplasm. It carries out the reaction 3-methyl-2-oxobutanoate + (6R)-5,10-methylene-5,6,7,8-tetrahydrofolate + H2O = 2-dehydropantoate + (6S)-5,6,7,8-tetrahydrofolate. It functions in the pathway cofactor biosynthesis; (R)-pantothenate biosynthesis; (R)-pantoate from 3-methyl-2-oxobutanoate: step 1/2. Its function is as follows. Catalyzes the reversible reaction in which hydroxymethyl group from 5,10-methylenetetrahydrofolate is transferred onto alpha-ketoisovalerate to form ketopantoate. The sequence is that of 3-methyl-2-oxobutanoate hydroxymethyltransferase from Arthrobacter sp. (strain FB24).